Consider the following 587-residue polypeptide: MTLFKVYARALRYLGAYKLRVSLVVVANIVLATITIAEPILFGRIIDAISGKGEVKPILFMWATFAVFNTIAFVLVAREADRLAHGRRATLLTEAFGRIISMPLGWHHQRGTSNALHTLLRACETLFGLWLEFMRNHLSTVIALALLIPTAMSMDLRLSAVLMVLAIAYWLIGRVVMSRTKDGQASVENHYHTVFSHVSDSISNVSVLHSYNRIEAETRALKSFADRLLEAQYPVLDWWAIASALNRMASTIAMMVVLIIGTMLVQAGQLRVGDVIAFIGFANLLIGRLDLMRQFATQIFEARSKLEEFYALEDSVREREEPAGNGEIKDVKGAIEFRDVSFGFGNSSQGLHNVSFSVKAGQTVAIVGPTGAGKTTLVNLLQRVYDAQGGKILVDGTDITKVTRKSLRRHIATVFQDAGLLNRSISDNIRLGREGASEEEMRRAAEAAAAADFIETREDRYDTHVGERGNKLSGGERQRIAIARAILKDAPILVLDEATSALDVETEARVKAAIDNLRQNRTTFIIAHRLSTVREADMVLFLDDGRVVEQGSFDELSHSNGRFAALLRASGILTDEEVRKAHTTEAA.

Residues 21–301 (VSLVVVANIV…MRQFATQIFE (281 aa)) enclose the ABC transmembrane type-1 domain. Helical transmembrane passes span 23-43 (LVVV…ILFG), 57-77 (PILF…VLVA), 128-148 (GLWL…ALLI), 158-178 (LSAV…VVMS), 248-268 (MAST…VQAG), and 272-292 (VGDV…LDLM). One can recognise an ABC transporter domain in the interval 335–569 (IEFRDVSFGF…NGRFAALLRA (235 aa)). 368–375 (GPTGAGKT) contributes to the ATP binding site.

This sequence belongs to the ABC transporter superfamily. Beta-(1--&gt;2)glucan exporter (TC 3.A.1.108.1) family. As to quaternary structure, homodimer.

The protein resides in the cell inner membrane. It carries out the reaction [(1-&gt;2)-beta-D-glucosyl](n)(in) + ATP + H2O = [(1-&gt;2)-beta-D-glucosyl](n)(out) + ADP + phosphate + H(+). In terms of biological role, involved in beta-(1--&gt;2)glucan export. Transmembrane domains (TMD) form a pore in the inner membrane and the ATP-binding domain (NBD) is responsible for energy generation. The chain is Beta-(1--&gt;2)glucan export ATP-binding/permease protein NdvA from Rhizobium johnstonii (strain DSM 114642 / LMG 32736 / 3841) (Rhizobium leguminosarum bv. viciae).